The following is a 119-amino-acid chain: Large ribosomal subunit protein uL18 (119 aa).

This sequence belongs to the universal ribosomal protein uL18 family. As to quaternary structure, part of the 50S ribosomal subunit; part of the 5S rRNA/L5/L18/L25 subcomplex. Contacts the 5S and 23S rRNAs.

This is one of the proteins that bind and probably mediate the attachment of the 5S RNA into the large ribosomal subunit, where it forms part of the central protuberance. This Chelativorans sp. (strain BNC1) protein is Large ribosomal subunit protein uL18.